The chain runs to 314 residues: 3'-5' exoribonuclease YhaM (314 aa).

Residues 163 to 279 (HVVSMLDLAK…LHYIDNLDAK (117 aa)) form the HD domain.

Belongs to the YhaM family.

Functionally, shows a 3'-5' exoribonuclease activity. The sequence is that of 3'-5' exoribonuclease YhaM from Bacillus thuringiensis (strain Al Hakam).